We begin with the raw amino-acid sequence, 254 residues long: MPRYRGPFRKRGPLPFRYVMLLSVVFFILSTTVSLWMINGSIKPVLMDIGEMETKRIATEVIQDSIEDYMSDSENMKDMFQMNSDENGNLTTIDFNTQVVNSVKTKVTKQLQAHLKEMETHTGHSGASENIMINIPLGQVTGNSLLGNLGPKIPVRFNLIGDAFTDVKTKIKPYGINNALIDISIFVEIKVKVIIPFASKTAVVTNNVPVSIKAVQGEVPQFYNGSGGSGVTPSVQLPSSKENGADSKKEKSSK.

Residues 18–38 (YVMLLSVVFFILSTTVSLWMI) form a helical membrane-spanning segment. The segment at 226-254 (SGGSGVTPSVQLPSSKENGADSKKEKSSK) is disordered. Over residues 231-242 (VTPSVQLPSSKE) the composition is skewed to polar residues. The span at 243 to 254 (NGADSKKEKSSK) shows a compositional bias: basic and acidic residues.

It is found in the cell membrane. Required for sporulation. The protein is Sporulation protein YunB (yunB) of Bacillus subtilis (strain 168).